Consider the following 516-residue polypeptide: Ribonuclease Y (516 aa).

Residues Met-1–Trp-21 traverse the membrane as a helical segment. The KH domain occupies Thr-206–Leu-269. One can recognise an HD domain in the interval Ala-332–Ala-425.

It belongs to the RNase Y family.

The protein localises to the cell membrane. Endoribonuclease that initiates mRNA decay. This Lachnoclostridium phytofermentans (strain ATCC 700394 / DSM 18823 / ISDg) (Clostridium phytofermentans) protein is Ribonuclease Y.